The sequence spans 362 residues: Cobalt-precorrin-5B C(1)-methyltransferase (362 aa).

It belongs to the CbiD family.

The enzyme catalyses Co-precorrin-5B + S-adenosyl-L-methionine = Co-precorrin-6A + S-adenosyl-L-homocysteine. Its pathway is cofactor biosynthesis; adenosylcobalamin biosynthesis; cob(II)yrinate a,c-diamide from sirohydrochlorin (anaerobic route): step 6/10. Catalyzes the methylation of C-1 in cobalt-precorrin-5B to form cobalt-precorrin-6A. This is Cobalt-precorrin-5B C(1)-methyltransferase from Burkholderia thailandensis (strain ATCC 700388 / DSM 13276 / CCUG 48851 / CIP 106301 / E264).